We begin with the raw amino-acid sequence, 405 residues long: 4-hydroxy-3-methylbut-2-en-1-yl diphosphate synthase (flavodoxin) (405 aa).

[4Fe-4S] cluster contacts are provided by Cys-297, Cys-300, Cys-343, and Glu-350.

This sequence belongs to the IspG family. It depends on [4Fe-4S] cluster as a cofactor.

It catalyses the reaction (2E)-4-hydroxy-3-methylbut-2-enyl diphosphate + oxidized [flavodoxin] + H2O + 2 H(+) = 2-C-methyl-D-erythritol 2,4-cyclic diphosphate + reduced [flavodoxin]. It functions in the pathway isoprenoid biosynthesis; isopentenyl diphosphate biosynthesis via DXP pathway; isopentenyl diphosphate from 1-deoxy-D-xylulose 5-phosphate: step 5/6. Its function is as follows. Converts 2C-methyl-D-erythritol 2,4-cyclodiphosphate (ME-2,4cPP) into 1-hydroxy-2-methyl-2-(E)-butenyl 4-diphosphate. The polypeptide is 4-hydroxy-3-methylbut-2-en-1-yl diphosphate synthase (flavodoxin) (Francisella tularensis subsp. mediasiatica (strain FSC147)).